The chain runs to 550 residues: Membrane-bound alkaline phosphatase (550 aa).

The first 39 residues, M1 to R39, serve as a signal peptide directing secretion. D83 provides a ligand contact to Mg(2+). D83 provides a ligand contact to Zn(2+). Residue S133 is the Phosphoserine intermediate of the active site. The Mg(2+) site is built by H196, S198, and E356. Zn(2+) is bound by residues D361, H365, D402, H403, and H479. The GPI-anchor amidated serine moiety is linked to residue S524. Positions A525–L550 are cleaved as a propeptide — removed in mature form.

This sequence belongs to the alkaline phosphatase family. Mg(2+) serves as cofactor. The cofactor is Zn(2+). As to expression, midgut.

It localises to the cell membrane. It catalyses the reaction a phosphate monoester + H2O = an alcohol + phosphate. This is Membrane-bound alkaline phosphatase (Alp-m) from Bombyx mori (Silk moth).